We begin with the raw amino-acid sequence, 320 residues long: Ferrochelatase (320 aa).

H194 and E275 together coordinate Fe cation.

Belongs to the ferrochelatase family. As to quaternary structure, monomer.

Its subcellular location is the cytoplasm. It carries out the reaction heme b + 2 H(+) = protoporphyrin IX + Fe(2+). It participates in porphyrin-containing compound metabolism; protoheme biosynthesis; protoheme from protoporphyrin-IX: step 1/1. Catalyzes the ferrous insertion into protoporphyrin IX. The sequence is that of Ferrochelatase from Escherichia coli (strain K12 / MC4100 / BW2952).